Reading from the N-terminus, the 566-residue chain is Type IV pilus assembly ATPase PilB (566 aa).

326–333 (GPTGSGKT) serves as a coordination point for ATP. Residues cysteine 459, cysteine 462, cysteine 494, and cysteine 497 each contribute to the Zn(2+) site.

Belongs to the GSP E family. As to quaternary structure, homohexamer. Interacts with PilC. Interacts with FimX; this interaction positively regulates T4P assembly and twitching motility by promoting the activity of the PilB ATPase.

The protein localises to the cytoplasm. ATPase component of the type IV pilus (T4P) that plays a role in surface and host cell adhesion, colonization, biofilm maturation, virulence, and twitching, a form of surface-associated motility facilitated by cycles of extension, adhesion, and retraction of T4P fibers. Acts as a molecular motor to provide the energy that is required for biogenesis of the pilus and the extrusion of substrates generated in the cytoplasm. PilB ATPase activity is also essential for T4P extension while antagonist PilT ATPase activity is required for T4P retraction. This is Type IV pilus assembly ATPase PilB (pilB) from Pseudomonas aeruginosa (strain ATCC 15692 / DSM 22644 / CIP 104116 / JCM 14847 / LMG 12228 / 1C / PRS 101 / PAO1).